A 964-amino-acid polypeptide reads, in one-letter code: SKI family transcriptional corepressor 1 (964 aa).

6 disordered regions span residues 45–72 (TQLGPGREGSSSPNSKQELQPYSGSSAL), 278–365 (RTFS…GGSA), 414–452 (AGEPKGGPGTGSGGGAGTAAGAGGPGAGHLPPGAGPGPG), 525–587 (AGGG…RKSS), 610–766 (REAY…GPAA), and 793–842 (YLCT…EDGL). Over residues 283–310 (QGGGGGGANSGSGGAGKGGAGGGGGPGC) the composition is skewed to gly residues. Residues 345–355 (ALGLAAAANGP) are compositionally biased toward low complexity. Gly residues-rich tracts occupy residues 356-365 (AGPGGPGGSA) and 417-440 (PKGGPGTGSGGGAGTAAGAGGPGA). Residues 571 to 583 (SLAPLAPPPPPPA) show a composition bias toward pro residues. Residues 652-661 (DTADEPEVDV) show a composition bias toward acidic residues. The segment covering 798–808 (ETHEPDKEDNH) has biased composition (basic and acidic residues). Over residues 823–834 (DQRSVSQPSPAN) the composition is skewed to polar residues. Residues 857–921 (ENLAREELQK…DTLCNELDQE (65 aa)) adopt a coiled-coil conformation.

Belongs to the SKI family. In terms of assembly, interacts with LBX1. Interacts with SMAD1, SMAD2 and SMAD3.

It is found in the nucleus. Its function is as follows. Inhibits BMP signaling. Acts as a transcriptional corepressor of LBX1. The chain is SKI family transcriptional corepressor 1 (Skor1) from Rattus norvegicus (Rat).